A 513-amino-acid polypeptide reads, in one-letter code: Carboxyethyl-arginine beta-lactam-synthase (513 aa).

Positions 253 and 351 each coordinate Mg(2+).

This sequence belongs to the asparagine synthetase family. Homodimer. The cofactor is Mg(2+).

The enzyme catalyses N(2)-(2-carboxyethyl)-L-arginine + ATP = deoxyamidinoproclavaminate + AMP + diphosphate + H(+). It participates in antibiotic biosynthesis; clavulanate biosynthesis; clavulanate from D-glyceraldehyde 3-phosphate and L-arginine: step 2/8. This chain is Carboxyethyl-arginine beta-lactam-synthase (bls), found in Streptomyces clavuligerus.